The sequence spans 543 residues: Chaperonin GroEL 2 (543 aa).

ATP is bound by residues 29–32 (TLGP), 86–90 (DGTTT), G413, 479–481 (NAA), and D495.

Belongs to the chaperonin (HSP60) family. In terms of assembly, forms a cylinder of 14 subunits composed of two heptameric rings stacked back-to-back. Interacts with the co-chaperonin GroES.

The protein resides in the cytoplasm. It catalyses the reaction ATP + H2O + a folded polypeptide = ADP + phosphate + an unfolded polypeptide.. Together with its co-chaperonin GroES, plays an essential role in assisting protein folding. The GroEL-GroES system forms a nano-cage that allows encapsulation of the non-native substrate proteins and provides a physical environment optimized to promote and accelerate protein folding. This is Chaperonin GroEL 2 from Prochlorococcus marinus (strain NATL1A).